A 294-amino-acid polypeptide reads, in one-letter code: NAD kinase (294 aa).

Asp74 acts as the Proton acceptor in catalysis. NAD(+) contacts are provided by residues 74–75 (DG), 148–149 (NE), His159, Arg176, Asp178, 189–194 (TAYSLS), and Gln249.

This sequence belongs to the NAD kinase family. It depends on a divalent metal cation as a cofactor.

Its subcellular location is the cytoplasm. It carries out the reaction NAD(+) + ATP = ADP + NADP(+) + H(+). Involved in the regulation of the intracellular balance of NAD and NADP, and is a key enzyme in the biosynthesis of NADP. Catalyzes specifically the phosphorylation on 2'-hydroxyl of the adenosine moiety of NAD to yield NADP. In Vibrio campbellii (strain ATCC BAA-1116), this protein is NAD kinase.